Here is a 199-residue protein sequence, read N- to C-terminus: Peroxiredoxin-1 (199 aa).

Ser2 is subject to N-acetylserine. Residues 6 to 165 enclose the Thioredoxin domain; that stretch reads AKIGHRAPQF…TLRLVQAFQF (160 aa). Lys7 is modified (N6-acetyllysine; alternate). A Glycyl lysine isopeptide (Lys-Gly) (interchain with G-Cter in SUMO2); alternate cross-link involves residue Lys7. N6-acetyllysine occurs at positions 16 and 27. At Lys35 the chain carries N6-acetyllysine; alternate. N6-succinyllysine; alternate is present on Lys35. The active-site Cysteine sulfenic acid (-SOH) intermediate is Cys52. The residue at position 90 (Thr90) is a Phosphothreonine. A Glycyl lysine isopeptide (Lys-Gly) (interchain with G-Cter in SUMO2) cross-link involves residue Lys120. Position 136 is an N6-acetyllysine (Lys136). Residues 176 to 199 form a disordered region; that stretch reads GWKPGSDTIKPDVQKSKEYFSKQK. The segment covering 184–199 has biased composition (basic and acidic residues); sequence IKPDVQKSKEYFSKQK. A Glycyl lysine isopeptide (Lys-Gly) (interchain with G-Cter in SUMO1) cross-link involves residue Lys185. An N6-acetyllysine modification is found at Lys197.

The protein belongs to the peroxiredoxin family. AhpC/Prx1 subfamily. As to quaternary structure, homodimer; disulfide-linked, upon oxidation. 5 homodimers assemble to form a ring-like decamer. Interacts with GDPD5; forms a mixed-disulfide with GDPD5. Interacts with SESN1 and SESN2. Interacts with FAM107A. In terms of processing, phosphorylated on Thr-90 during the M-phase, which leads to a decrease in enzymatic activity. Post-translationally, acetylation increases reducing activity and resistance to superoxidation. Deacetylated by HDAC6 which decreases reducing activity.

It is found in the cytoplasm. The catalysed reaction is a hydroperoxide + [thioredoxin]-dithiol = an alcohol + [thioredoxin]-disulfide + H2O. Thiol-specific peroxidase that catalyzes the reduction of hydrogen peroxide and organic hydroperoxides to water and alcohols, respectively. Plays a role in cell protection against oxidative stress by detoxifying peroxides and as sensor of hydrogen peroxide-mediated signaling events. Might participate in the signaling cascades of growth factors and tumor necrosis factor-alpha by regulating the intracellular concentrations of H(2)O(2). Reduces an intramolecular disulfide bond in GDPD5 that gates the ability to GDPD5 to drive postmitotic motor neuron differentiation. This Bos taurus (Bovine) protein is Peroxiredoxin-1 (PRDX1).